A 513-amino-acid polypeptide reads, in one-letter code: Maturase K (513 aa).

It belongs to the intron maturase 2 family. MatK subfamily.

It is found in the plastid. The protein resides in the chloroplast. Functionally, usually encoded in the trnK tRNA gene intron. Probably assists in splicing its own and other chloroplast group II introns. This chain is Maturase K, found in Eleusine indica (Goosegrass).